A 324-amino-acid chain; its full sequence is Glyoxylate/hydroxypyruvate reductase B (324 aa).

Catalysis depends on residues arginine 237 and glutamate 266. Catalysis depends on histidine 285, which acts as the Proton donor.

It belongs to the D-isomer specific 2-hydroxyacid dehydrogenase family. GhrB subfamily. Homodimer.

The protein localises to the cytoplasm. It catalyses the reaction glycolate + NADP(+) = glyoxylate + NADPH + H(+). It carries out the reaction (R)-glycerate + NAD(+) = 3-hydroxypyruvate + NADH + H(+). The catalysed reaction is (R)-glycerate + NADP(+) = 3-hydroxypyruvate + NADPH + H(+). Catalyzes the NADPH-dependent reduction of glyoxylate and hydroxypyruvate into glycolate and glycerate, respectively. This chain is Glyoxylate/hydroxypyruvate reductase B, found in Escherichia coli O9:H4 (strain HS).